Here is a 170-residue protein sequence, read N- to C-terminus: Acireductone dioxygenase (170 aa).

Fe(2+) is bound by residues histidine 99, histidine 101, glutamate 105, and histidine 144. Ni(2+) is bound by residues histidine 99, histidine 101, glutamate 105, and histidine 144.

This sequence belongs to the acireductone dioxygenase (ARD) family. As to quaternary structure, monomer. Fe(2+) is required as a cofactor. Requires Ni(2+) as cofactor.

It carries out the reaction 1,2-dihydroxy-5-(methylsulfanyl)pent-1-en-3-one + O2 = 3-(methylsulfanyl)propanoate + CO + formate + 2 H(+). The catalysed reaction is 1,2-dihydroxy-5-(methylsulfanyl)pent-1-en-3-one + O2 = 4-methylsulfanyl-2-oxobutanoate + formate + 2 H(+). Its pathway is amino-acid biosynthesis; L-methionine biosynthesis via salvage pathway; L-methionine from S-methyl-5-thio-alpha-D-ribose 1-phosphate: step 5/6. Its function is as follows. Catalyzes 2 different reactions between oxygen and the acireductone 1,2-dihydroxy-3-keto-5-methylthiopentene (DHK-MTPene) depending upon the metal bound in the active site. Fe-containing acireductone dioxygenase (Fe-ARD) produces formate and 2-keto-4-methylthiobutyrate (KMTB), the alpha-ketoacid precursor of methionine in the methionine recycle pathway. Ni-containing acireductone dioxygenase (Ni-ARD) produces methylthiopropionate, carbon monoxide and formate, and does not lie on the methionine recycle pathway. The protein is Acireductone dioxygenase of Bacillus cytotoxicus (strain DSM 22905 / CIP 110041 / 391-98 / NVH 391-98).